The following is a 255-amino-acid chain: Tryptophan synthase alpha chain (255 aa).

Residues Glu42 and Asp53 each act as proton acceptor in the active site.

The protein belongs to the TrpA family. In terms of assembly, tetramer of two alpha and two beta chains.

It carries out the reaction (1S,2R)-1-C-(indol-3-yl)glycerol 3-phosphate + L-serine = D-glyceraldehyde 3-phosphate + L-tryptophan + H2O. Its pathway is amino-acid biosynthesis; L-tryptophan biosynthesis; L-tryptophan from chorismate: step 5/5. Functionally, the alpha subunit is responsible for the aldol cleavage of indoleglycerol phosphate to indole and glyceraldehyde 3-phosphate. This Wolinella succinogenes (strain ATCC 29543 / DSM 1740 / CCUG 13145 / JCM 31913 / LMG 7466 / NCTC 11488 / FDC 602W) (Vibrio succinogenes) protein is Tryptophan synthase alpha chain.